The sequence spans 581 residues: Zinc finger protein 319 (581 aa).

The segment covering 1–22 has biased composition (low complexity); it reads MSESWQQPPQTQPQQPQAPQPQ. Residues 1–39 are disordered; the sequence is MSESWQQPPQTQPQQPQAPQPQHHAETPPALAEHTLPPG. The C2H2-type 1 zinc-finger motif lies at 75–99; sequence PKCGVCGHDLAHLSSPHEHQCLAGH. Residues 103 to 125 form a C2H2-type 2; degenerate zinc finger; that stretch reads FQCTQCLKIFHQATDLLEHQCVQ. Residue K129 forms a Glycyl lysine isopeptide (Lys-Gly) (interchain with G-Cter in SUMO2) linkage. C2H2-type zinc fingers lie at residues 131-153, 201-223, 229-251, and 257-279; these read FVCG…HSSH, YSCP…ERIH, YKCT…KRTH, and YKCA…MYAH. S280 is modified (phosphoserine). The C2H2-type 7; degenerate zinc finger occupies 286-308; the sequence is FRCNVCELHFKESSELLQHPCTP. 3 C2H2-type zinc fingers span residues 314 to 336, 342 to 364, and 370 to 392; these read FRCG…ERTH, FKCD…RRTH, and FKCG…QHVH. Residues 398-420 form a C2H2-type 11; degenerate zinc finger; it reads FKCPVCQKGFDQSAELLRHKCLP. A C2H2-type 12 zinc finger spans residues 427-449; the sequence is FKCPVCNKAYKRASALQKHQLSH. The C2H2-type 13; degenerate zinc-finger motif lies at 457–479; that stretch reads LRCTLCERRFFSSSEFVQHRCDP. 3 consecutive C2H2-type zinc fingers follow at residues 485–507, 513–535, and 541–563; these read LKCP…RRVH, YKCP…QGVH, and FKCV…SAQH.

The protein belongs to the krueppel C2H2-type zinc-finger protein family.

It is found in the nucleus. In terms of biological role, may be involved in transcriptional regulation. The polypeptide is Zinc finger protein 319 (Znf319) (Mus musculus (Mouse)).